Here is a 1719-residue protein sequence, read N- to C-terminus: Serine/threonine-protein kinase MRCK alpha (1719 aa).

The region spanning 77–343 (FEILKVIGRG…IEDFKKHPFF (267 aa)) is the Protein kinase domain. Residues 83-91 (IGRGAFGEV) and Lys-106 each bind ATP. Asp-201 serves as the catalytic Proton acceptor. Ser-222 and Ser-234 each carry phosphoserine; by autocatalysis. A Phosphothreonine; by autocatalysis modification is found at Thr-240. The 71-residue stretch at 344–414 (SGIDWDNIRN…TSSCVLSDRS (71 aa)) folds into the AGC-kinase C-terminal domain. Coiled-coil stretches lie at residues 437 to 670 (NNLA…KQKQ), 713 to 820 (SEIK…WEAQ), and 880 to 943 (LELQ…SEKG). The Phorbol-ester/DAG-type zinc-finger motif lies at 999–1049 (THQFFVKSFTAPTKCHQCTSLMVGLIRQGCSCEVCGFSCHITCVNKAPTVC). The region spanning 1069–1188 (GTAYEGHVRI…WVGVLSELHK (120 aa)) is the PH domain. In terms of domain architecture, CNH spans 1214–1486 (IKTTQAAAII…RPLNTEGSLN (273 aa)). Ser-1532 is modified (phosphoserine). The CRIB domain occupies 1558–1571 (ISNPTNFNHIAHMG). The interval 1579–1719 (LKDLPMNPRP…ESTDRGSWDP (141 aa)) is disordered. The segment covering 1591–1606 (SRTVFSGSVSIPSITK) has biased composition (polar residues). 9 positions are modified to phosphoserine: Ser-1598, Ser-1600, Ser-1616, Ser-1638, Ser-1651, Ser-1656, Ser-1680, Ser-1706, and Ser-1708. A compositionally biased stretch (low complexity) spans 1612–1627 (GRSMSASSGLSARSSA). Residues 1652–1661 (PSEGSLSSGG) are compositionally biased toward low complexity.

The protein belongs to the protein kinase superfamily. AGC Ser/Thr protein kinase family. DMPK subfamily. In terms of assembly, homodimer and homotetramer via the coiled coil regions. Interacts tightly with GTP-bound but not GDP-bound CDC42. Forms a tripartite complex with MYO18A and LRP35A with the latter acting as an adapter connecting CDC42BPA and MYO18A. LRP35A binding results in activation of CDC42BPA by abolition of its negative autoregulation. Interacts with LURAP1. Interacts (via AGC-kinase C-terminal domain) with FAM89B/LRAP25 (via LRR repeat). Forms a tripartite complex with FAM89B/LRAP25 and LIMK1. Mg(2+) is required as a cofactor. In terms of processing, proteolytically cleaved by caspases upon apoptosis induction. The cleavage at Asp-478 by CASP3 increases its kinase activity (in vitro).

Its subcellular location is the cytoplasm. The protein localises to the cell projection. It is found in the lamellipodium. It carries out the reaction L-seryl-[protein] + ATP = O-phospho-L-seryl-[protein] + ADP + H(+). The catalysed reaction is L-threonyl-[protein] + ATP = O-phospho-L-threonyl-[protein] + ADP + H(+). With respect to regulation, maintained in an inactive, closed conformation by an interaction between the kinase domain and the negative autoregulatory C-terminal coiled-coil region. Agonist binding to the phorbol ester binding site disrupts this, releasing the kinase domain to allow N-terminus-mediated dimerization and kinase activation by transautophosphorylation. Inhibited by chelerythrine chloride. Functionally, serine/threonine-protein kinase which is an important downstream effector of CDC42 and plays a role in the regulation of cytoskeleton reorganization and cell migration. Regulates actin cytoskeletal reorganization via phosphorylation of PPP1R12C and MYL9/MLC2. In concert with MYO18A and LRP35A, is involved in modulating lamellar actomyosin retrograde flow that is crucial to cell protrusion and migration. Phosphorylates: PPP1R12A and LIMK2. May play a role in TFRC-mediated iron uptake. In concert with FAM89B/LRAP25 mediates the targeting of LIMK1 to the lamellipodium resulting in its activation and subsequent phosphorylation of CFL1 which is important for lamellipodial F-actin regulation. Triggers the formation of an extrusion apical actin ring required for epithelial extrusion of apoptotic cells. The polypeptide is Serine/threonine-protein kinase MRCK alpha (Cdc42bpa) (Mus musculus (Mouse)).